Consider the following 811-residue polypeptide: Ribonucleoside-diphosphate reductase large subunit (811 aa).

Substrate is bound by residues Thr-231, 246–247 (SC), Gly-277, 450–454 (NLCTE), and 636–640 (PTASS). A disulfide bond links Cys-247 and Cys-467. Asn-450 serves as the catalytic Proton acceptor. The active-site Cysteine radical intermediate is Cys-452. Glu-454 acts as the Proton acceptor in catalysis.

Belongs to the ribonucleoside diphosphate reductase large chain family. In terms of assembly, heterotetramer composed of a homodimer of the large subunit (R1) and a homodimer of the small subunit (R2). Larger multisubunit protein complex are also active, composed of (R1)n(R2)n.

It catalyses the reaction a 2'-deoxyribonucleoside 5'-diphosphate + [thioredoxin]-disulfide + H2O = a ribonucleoside 5'-diphosphate + [thioredoxin]-dithiol. Ribonucleoside-diphosphate reductase holoenzyme provides the precursors necessary for viral DNA synthesis. Allows virus growth in non-dividing cells, as well as reactivation from latency in infected hosts. Catalyzes the biosynthesis of deoxyribonucleotides from the corresponding ribonucleotides. This Amazona oratrix (yellow-headed parrot) protein is Ribonucleoside-diphosphate reductase large subunit.